We begin with the raw amino-acid sequence, 213 residues long: MEVEKEFITDEAKELLSKDKLIQQAYNEVKTSICSPIWPATSKTFTINNTEKNCNGVVPIKELCYTLLEDTYNWYREKPLDILKLEKKKGGPIDVYKEFIENSELKRVGMEFETGNISSAHRSMNKLLLGLKHGEIDLAIILMPIKQLAYYLTDRVTNFEELEPYFELTEGQPFIFIGFNAEAYNSNVPLIPKGSDGMSKRSIKKWKDKVENK.

4 residues coordinate Mg(2+): Glu-77, Asp-94, Glu-111, and Phe-112. The active-site Proton acceptor is Glu-113.

Homodimer. Mg(2+) serves as cofactor.

It catalyses the reaction Endonucleolytic cleavage of DNA to give specific double-stranded fragments with terminal 5'-phosphates.. Functionally, a P subtype restriction enzyme that recognizes the double-stranded sequence 5'-GGATCC-3' and cleaves after G-1. This is Type II restriction enzyme BamHI from Bacillus amyloliquefaciens (Bacillus velezensis).